The chain runs to 120 residues: Large ribosomal subunit protein bL19 (120 aa).

It belongs to the bacterial ribosomal protein bL19 family.

In terms of biological role, this protein is located at the 30S-50S ribosomal subunit interface and may play a role in the structure and function of the aminoacyl-tRNA binding site. The polypeptide is Large ribosomal subunit protein bL19 (Rippkaea orientalis (strain PCC 8801 / RF-1) (Cyanothece sp. (strain PCC 8801))).